The chain runs to 339 residues: MNQRNASMTVIGAGSYGTALAITLARNGHEVVLWGHDPEHIATLERDRCNAAFLPDVPFPDTLHLESDLATALAASRNILVVVPSHVFGEVLRQIKPLMRPDARLVWATKGLEAETGRLLQDVAREALGDQIPLAVISGPTFAKELAAGLPTAISLASTDQTFADDLQQLLHCGKSFRVYSNPDFIGVQLGGAVKNVIAIGAGMSDGIGFGANARTALITRGLAEMSRLGAALGADPATFMGMAGLGDLVLTCTDNQSRNRRFGMMLGQGMDVQSAQEKIGQVVEGYRNTKEVRELAHRFGVEMPITEEIYQVLYCGKNAREAALTLLGRARKDERSSH.

Serine 15, tyrosine 16, histidine 36, and lysine 110 together coordinate NADPH. Sn-glycerol 3-phosphate-binding residues include lysine 110, glycine 139, and threonine 141. Alanine 143 lines the NADPH pocket. Sn-glycerol 3-phosphate-binding residues include lysine 195, aspartate 248, serine 258, arginine 259, and asparagine 260. The Proton acceptor role is filled by lysine 195. NADPH is bound at residue arginine 259. NADPH contacts are provided by valine 283 and glutamate 285.

The protein belongs to the NAD-dependent glycerol-3-phosphate dehydrogenase family.

It is found in the cytoplasm. It catalyses the reaction sn-glycerol 3-phosphate + NAD(+) = dihydroxyacetone phosphate + NADH + H(+). It carries out the reaction sn-glycerol 3-phosphate + NADP(+) = dihydroxyacetone phosphate + NADPH + H(+). Its pathway is membrane lipid metabolism; glycerophospholipid metabolism. Its function is as follows. Catalyzes the reduction of the glycolytic intermediate dihydroxyacetone phosphate (DHAP) to sn-glycerol 3-phosphate (G3P), the key precursor for phospholipid synthesis. This chain is Glycerol-3-phosphate dehydrogenase [NAD(P)+], found in Shigella dysenteriae serotype 1 (strain Sd197).